Reading from the N-terminus, the 76-residue chain is Translational regulator CsrA (76 aa).

The protein belongs to the CsrA/RsmA family. In terms of assembly, homodimer; the beta-strands of each monomer intercalate to form a hydrophobic core, while the alpha-helices form wings that extend away from the core.

The protein resides in the cytoplasm. Functionally, a translational regulator that binds mRNA to regulate translation initiation and/or mRNA stability. Usually binds in the 5'-UTR at or near the Shine-Dalgarno sequence preventing ribosome-binding, thus repressing translation. Its main target seems to be the major flagellin gene, while its function is anatagonized by FliW. The chain is Translational regulator CsrA from Wolinella succinogenes (strain ATCC 29543 / DSM 1740 / CCUG 13145 / JCM 31913 / LMG 7466 / NCTC 11488 / FDC 602W) (Vibrio succinogenes).